Consider the following 414-residue polypeptide: Probable mannose-1-phosphate guanyltransferase (414 aa).

The protein belongs to the transferase hexapeptide repeat family.

The protein resides in the cytoplasm. It is found in the nucleus. It carries out the reaction alpha-D-mannose 1-phosphate + GTP + H(+) = GDP-alpha-D-mannose + diphosphate. It functions in the pathway nucleotide-sugar biosynthesis; GDP-alpha-D-mannose biosynthesis; GDP-alpha-D-mannose from alpha-D-mannose 1-phosphate (GTP route): step 1/1. Functionally, involved in cell wall synthesis where it is required for glycosylation. This chain is Probable mannose-1-phosphate guanyltransferase, found in Schizosaccharomyces pombe (strain 972 / ATCC 24843) (Fission yeast).